Consider the following 319-residue polypeptide: Pantothenate kinase (319 aa).

96–103 contributes to the ATP binding site; the sequence is GSVAVGKS.

This sequence belongs to the prokaryotic pantothenate kinase family.

Its subcellular location is the cytoplasm. It carries out the reaction (R)-pantothenate + ATP = (R)-4'-phosphopantothenate + ADP + H(+). The protein operates within cofactor biosynthesis; coenzyme A biosynthesis; CoA from (R)-pantothenate: step 1/5. The protein is Pantothenate kinase of Bacillus velezensis (strain DSM 23117 / BGSC 10A6 / LMG 26770 / FZB42) (Bacillus amyloliquefaciens subsp. plantarum).